The primary structure comprises 63 residues: Small ribosomal subunit protein eS27 (63 aa).

4 residues coordinate Zn(2+): Cys18, Cys21, Cys37, and Cys40. Residues 18-40 form a C4-type zinc finger; the sequence is CIDCGNEQIVFSHPATKVRCLIC.

This sequence belongs to the eukaryotic ribosomal protein eS27 family. Part of the 30S ribosomal subunit. Zn(2+) serves as cofactor.

The sequence is that of Small ribosomal subunit protein eS27 from Pyrococcus furiosus (strain ATCC 43587 / DSM 3638 / JCM 8422 / Vc1).